The primary structure comprises 160 residues: Cytochrome b6-f complex subunit 4 (160 aa).

3 consecutive transmembrane segments (helical) span residues 36 to 56 (LLYV…ALAV), 95 to 115 (LLGV…PFIE), and 131 to 151 (TVFL…ALPL).

It belongs to the cytochrome b family. PetD subfamily. As to quaternary structure, the 4 large subunits of the cytochrome b6-f complex are cytochrome b6, subunit IV (17 kDa polypeptide, PetD), cytochrome f and the Rieske protein, while the 4 small subunits are PetG, PetL, PetM and PetN. The complex functions as a dimer.

The protein localises to the cellular thylakoid membrane. In terms of biological role, component of the cytochrome b6-f complex, which mediates electron transfer between photosystem II (PSII) and photosystem I (PSI), cyclic electron flow around PSI, and state transitions. The chain is Cytochrome b6-f complex subunit 4 from Nostoc punctiforme (strain ATCC 29133 / PCC 73102).